The primary structure comprises 133 residues: Heat shock protein 15 (133 aa).

Residues 9–71 form the S4 RNA-binding domain; it reads VRLDKWLWAA…DERTVIVKAI (63 aa). The tract at residues 105-133 is disordered; sequence NALTMPHPDRRPDKKERRDLLRFKHGDSE. The segment covering 111 to 133 has biased composition (basic and acidic residues); it reads HPDRRPDKKERRDLLRFKHGDSE.

The protein belongs to the HSP15 family. Monomer.

In terms of biological role, involved in the recycling of free 50S ribosomal subunits that still carry a nascent chain. Binds RNA more specifically than DNA. Binds with very high affinity to the free 50S ribosomal subunit. Does not bind it when it is part of the 70S ribosome. This Escherichia coli O157:H7 protein is Heat shock protein 15 (hslR).